A 439-amino-acid polypeptide reads, in one-letter code: Aspartate--tRNA(Asp/Asn) ligase (439 aa).

Glu177 contributes to the L-aspartate binding site. The aspartate stretch occupies residues Gln199–Lys202. Arg221 contributes to the L-aspartate binding site. ATP is bound by residues Arg221–Glu223, Arg229–Leu231, and Glu362. Mg(2+) is bound by residues Glu362 and Ser365. The L-aspartate site is built by Ser365 and Arg369. Gly410–Arg413 contacts ATP.

Belongs to the class-II aminoacyl-tRNA synthetase family. Type 2 subfamily. Homodimer. Requires Mg(2+) as cofactor.

It is found in the cytoplasm. The enzyme catalyses tRNA(Asx) + L-aspartate + ATP = L-aspartyl-tRNA(Asx) + AMP + diphosphate. Functionally, aspartyl-tRNA synthetase with relaxed tRNA specificity since it is able to aspartylate not only its cognate tRNA(Asp) but also tRNA(Asn). Reaction proceeds in two steps: L-aspartate is first activated by ATP to form Asp-AMP and then transferred to the acceptor end of tRNA(Asp/Asn). The protein is Aspartate--tRNA(Asp/Asn) ligase of Methanosphaera stadtmanae (strain ATCC 43021 / DSM 3091 / JCM 11832 / MCB-3).